We begin with the raw amino-acid sequence, 365 residues long: Peptidylglycine alpha-hydroxylating monooxygenase (365 aa).

The first 24 residues, Met1–Gly24, serve as a signal peptide directing secretion. 2 disulfide bridges follow: Cys69–Cys114 and Cys102–Cys129. Asn88 is a glycosylation site (N-linked (GlcNAc...) asparagine). Cu cation-binding residues include His95 and His96. His172, His241, and His243 together coordinate Cu cation. Asn280 carries an N-linked (GlcNAc...) asparagine glycan. Residues Cys297 and Cys318 are joined by a disulfide bond. Met317 is a binding site for Cu cation.

It belongs to the copper type II ascorbate-dependent monooxygenase family. Cu(2+) serves as cofactor. As to expression, expressed in the central nervous system (CNS) in a small number of CNS neurons (approximately a few hundred). Expression is present both in cell bodies and within neuropil regions. It is strongly expressed in neuroendocrine neurons (at protein level).

It localises to the secreted. The enzyme catalyses a [peptide]-C-terminal glycine + 2 L-ascorbate + O2 = a [peptide]-C-terminal (2S)-2-hydroxyglycine + 2 monodehydro-L-ascorbate radical + H2O. Monooxygenase that catalyzes an essential reaction in C-terminal alpha-amidation of peptides. Produces an unstable peptidyl(2-hydroxyglycine) intermediate. C-terminal amidation of peptides is required for normal developmental transitions and for biosynthesis of secretory peptides throughout the life. In Drosophila melanogaster (Fruit fly), this protein is Peptidylglycine alpha-hydroxylating monooxygenase (Phm).